Consider the following 351-residue polypeptide: Anthranilate phosphoribosyltransferase (351 aa).

5-phospho-alpha-D-ribose 1-diphosphate contacts are provided by residues Gly84, 87–88 (GD), 95–98 (NISS), 113–121 (KHGNRGASS), and Ala125. Gly84 lines the anthranilate pocket. Ser97 contacts Mg(2+). Asn116 lines the anthranilate pocket. Position 171 (Arg171) interacts with anthranilate. Positions 229 and 230 each coordinate Mg(2+).

Belongs to the anthranilate phosphoribosyltransferase family. In terms of assembly, homodimer. Mg(2+) serves as cofactor.

It catalyses the reaction N-(5-phospho-beta-D-ribosyl)anthranilate + diphosphate = 5-phospho-alpha-D-ribose 1-diphosphate + anthranilate. It participates in amino-acid biosynthesis; L-tryptophan biosynthesis; L-tryptophan from chorismate: step 2/5. Catalyzes the transfer of the phosphoribosyl group of 5-phosphorylribose-1-pyrophosphate (PRPP) to anthranilate to yield N-(5'-phosphoribosyl)-anthranilate (PRA). The protein is Anthranilate phosphoribosyltransferase of Clavibacter sepedonicus (Clavibacter michiganensis subsp. sepedonicus).